Consider the following 552-residue polypeptide: MQLLYYIYEEPVTIHLGTWISLGDIVIPFGLSLDSLAMTVIVPVGIITLCVLAYAIEYMSHDPNRNRFYIILSIFAVFMTILVVSDNYLMMFIGWEFVGVISYLLISFWSTRITAMKSALSAILLNRMGDTFFVIALGLMINYYHAVDYDTIALVTPYMNTFLLNTLGLLLLLAATAKSAQLGLHAWLLQAMEGPTPVSALLHAATMVCAGVYVLVRSYMILEYTPTMLLIICWLGGLTTLVSGLIAIVTNDIKRVIALSTMSQLSIMVLAIGISAYDLAIYHLYCHAFFKALLFMGAGSVIHSFVAESQDMRKYGGLIEYLPFSYTAILIASLSLMAIPGLTGYYSKDIIIESLYGSYTLSGYILYYIAVGSATLTSIYSLRVLYLTFMGVPNANKASYSHIHESLGMMIPMIVLVIYSIFIGYSRDSVIGHYALSLPANNGFIETEYTLPAYIKLLPLILGLTLSAILVYVYEYAYKINRSAVYDYLNNRIYYEQILNNIVIRNTLRLGGYMNAYIDQGLLKVLGSTGVSRAVTYINVIVIINILYLFFI.

15 helical membrane passes run 11-31 (PVTI…PFGL), 36-56 (LAMT…AYAI), 68-88 (FYII…SDNY), 89-109 (LMMF…ISFW), 121-141 (SAIL…GLMI), 152-172 (IALV…LLLL), 196-216 (TPVS…YVLV), 229-249 (LLII…IAIV), 256-274 (VIAL…AIGI), 287-307 (HAFF…SFVA), 322-342 (LPFS…IPGL), 365-386 (ILYY…RVLY), 406-426 (SLGM…IGYS), 453-473 (AYIK…LVYV), and 532-552 (SRAV…LFFI).

The protein belongs to the complex I subunit 5 family.

It localises to the mitochondrion inner membrane. It catalyses the reaction a ubiquinone + NADH + 5 H(+)(in) = a ubiquinol + NAD(+) + 4 H(+)(out). Core subunit of the mitochondrial membrane respiratory chain NADH dehydrogenase (Complex I) that is believed to belong to the minimal assembly required for catalysis. Complex I functions in the transfer of electrons from NADH to the respiratory chain. The immediate electron acceptor for the enzyme is believed to be ubiquinone. The polypeptide is NADH-ubiquinone oxidoreductase chain 5 (NAD5) (Candida albicans (strain SC5314 / ATCC MYA-2876) (Yeast)).